Here is a 386-residue protein sequence, read N- to C-terminus: 23S rRNA (uracil(747)-C(5))-methyltransferase RlmC (386 aa).

The [4Fe-4S] cluster site is built by cysteine 7, cysteine 15, cysteine 18, and cysteine 94. The S-adenosyl-L-methionine site is built by glutamine 219, phenylalanine 248, glutamate 269, and asparagine 316. Cysteine 343 acts as the Nucleophile in catalysis.

It belongs to the class I-like SAM-binding methyltransferase superfamily. RNA M5U methyltransferase family. RlmC subfamily.

The enzyme catalyses uridine(747) in 23S rRNA + S-adenosyl-L-methionine = 5-methyluridine(747) in 23S rRNA + S-adenosyl-L-homocysteine + H(+). In terms of biological role, catalyzes the formation of 5-methyl-uridine at position 747 (m5U747) in 23S rRNA. This Shewanella oneidensis (strain ATCC 700550 / JCM 31522 / CIP 106686 / LMG 19005 / NCIMB 14063 / MR-1) protein is 23S rRNA (uracil(747)-C(5))-methyltransferase RlmC.